We begin with the raw amino-acid sequence, 892 residues long: Alpha-actinin-1 (892 aa).

Methionine 1 carries the N-acetylmethionine modification. The segment at 1–247 is actin-binding; it reads MDHYDSQQTN…IMTYVSSFYH (247 aa). Position 6 is a phosphoserine (serine 6). Phosphotyrosine; by FAK1 is present on tyrosine 12. 2 Calponin-homology (CH) domains span residues 31 to 135 and 144 to 250; these read KQQR…LRFA and TSAK…HAFS. An N6-acetyllysine mark is found at lysine 95 and lysine 195. Spectrin repeat units follow at residues 274-384, 394-499, 509-620, and 630-733; these read QLME…WLLN, HLAE…ALER, QLYL…ALTE, and RLRK…EVEN. The interaction with DDN stretch occupies residues 274 to 733; it reads QLMEDYEKLA…IARTINEVEN (460 aa). Position 471 is a phosphoserine (serine 471). Lysine 676 carries the post-translational modification N6-acetyllysine. A Phosphoserine modification is found at serine 677. 2 consecutive EF-hand domains span residues 746–781 and 787–822; these read EQMN…LGYD and QGEA…ETAD. The Ca(2+) site is built by aspartate 759, aspartate 761, serine 763, threonine 765, and glutamate 770. Serine 890 is subject to Phosphoserine.

It belongs to the alpha-actinin family. As to quaternary structure, homodimer; antiparallel. Interacts with MYOZ2, TTID and LPP. Interacts with DDN. Interacts with PSD. Interacts with MICALL2. Interacts with DNM2 and CTTN. Interacts with PDLIM1. Interacts with PDLIM2. Interacts with PDLIM4 (via PDZ domain). Interacts with IGSF8.

The protein localises to the cytoplasm. It localises to the cytoskeleton. Its subcellular location is the myofibril. The protein resides in the sarcomere. It is found in the z line. The protein localises to the cell membrane. It localises to the cell junction. Its subcellular location is the cell projection. The protein resides in the ruffle. Its function is as follows. F-actin cross-linking protein which is thought to anchor actin to a variety of intracellular structures. Association with IGSF8 regulates the immune synapse formation and is required for efficient T-cell activation. This is Alpha-actinin-1 (ACTN1) from Bos taurus (Bovine).